The chain runs to 270 residues: Phosphatidylglycerol--prolipoprotein diacylglyceryl transferase (270 aa).

Transmembrane regions (helical) follow at residues 10-30, 56-76, 92-112, 120-140, 175-195, 202-222, and 237-257; these read VAVAIGPLQIHWYGLMYLVGI, LIFWLAMGVIVGGRLGYVLFY, WKGGMAFHGGFVGVMIAAWWF, FFQLMDFVAPLVPIGLGAGRI, SQLYQFALEGVALFIILNLYA, MAVSGMFALFYGIFRFVVEFV, and VTMGQILSLPMIIAGLLLIWL. Position 139 (R139) interacts with a 1,2-diacyl-sn-glycero-3-phospho-(1'-sn-glycerol).

The protein belongs to the Lgt family.

The protein localises to the cell inner membrane. It carries out the reaction L-cysteinyl-[prolipoprotein] + a 1,2-diacyl-sn-glycero-3-phospho-(1'-sn-glycerol) = an S-1,2-diacyl-sn-glyceryl-L-cysteinyl-[prolipoprotein] + sn-glycerol 1-phosphate + H(+). It participates in protein modification; lipoprotein biosynthesis (diacylglyceryl transfer). Its function is as follows. Catalyzes the transfer of the diacylglyceryl group from phosphatidylglycerol to the sulfhydryl group of the N-terminal cysteine of a prolipoprotein, the first step in the formation of mature lipoproteins. In Pseudomonas syringae pv. syringae (strain B728a), this protein is Phosphatidylglycerol--prolipoprotein diacylglyceryl transferase.